The following is a 102-amino-acid chain: A-type ATP synthase subunit F (102 aa).

Belongs to the V-ATPase F subunit family. In terms of assembly, has multiple subunits with at least A(3), B(3), C, D, E, F, H, I and proteolipid K(x).

The protein localises to the cell membrane. In terms of biological role, component of the A-type ATP synthase that produces ATP from ADP in the presence of a proton gradient across the membrane. In Thermococcus onnurineus (strain NA1), this protein is A-type ATP synthase subunit F.